A 516-amino-acid chain; its full sequence is Nuclear speckle splicing regulatory protein 1 (516 aa).

Disordered stretches follow at residues 1–43 (MATS…GESL), 111–137 (ERKK…KFAD), 151–170 (KERQ…EAAL), and 188–494 (QTVG…SSAR). At Ser-33 the chain carries Phosphoserine. The stretch at 100–176 (KYINQLLRAV…EAALDVKKQK (77 aa)) forms a coiled coil. Low complexity predominate over residues 207-221 (TSSAAAERSPSPEST). Composition is skewed to basic and acidic residues over residues 222-239 (ANRR…DQVD) and 271-466 (ERER…KLVE). Positions 358–401 (KGERDRRDNSPKDRERDRKGERDRRDNSPKDRERETRDKSPKDR) form a coiled coil.

This sequence belongs to the NSRP1 family.

The protein is Nuclear speckle splicing regulatory protein 1 (nsrp1) of Danio rerio (Zebrafish).